Here is a 309-residue protein sequence, read N- to C-terminus: MTATDELTQNAGRYELSHLRALEAEAIHIIREVAAEFERPVLLFSGGKDSIVMLHLAIKAFRPGRLPFPVMHVDTGHNFEEVLAARDELVAESGVRLVVAKVQDDIDAGRVVETIPSRNPMQTFTLLRAIRENKFDAAFGGARRDEEKARAKERVFSFRDEFGQWDPKNQRPELWNLYNGRHRKGEHIRAFPLSNWTEFDIWSYIGAEKIKLPSIYYAHQRKVFERDGMLLAVHKHLQPRKDEPIIEKSVRFRTVGDVTCTGCVESTAATVSEVIAETAISRLTERGATRADDRISEAGMEDRKREGYF.

This sequence belongs to the PAPS reductase family. CysD subfamily. In terms of assembly, heterodimer composed of CysD, the smaller subunit, and CysN.

The enzyme catalyses sulfate + ATP + H(+) = adenosine 5'-phosphosulfate + diphosphate. It functions in the pathway sulfur metabolism; hydrogen sulfide biosynthesis; sulfite from sulfate: step 1/3. Its function is as follows. With CysN forms the ATP sulfurylase (ATPS) that catalyzes the adenylation of sulfate producing adenosine 5'-phosphosulfate (APS) and diphosphate, the first enzymatic step in sulfur assimilation pathway. APS synthesis involves the formation of a high-energy phosphoric-sulfuric acid anhydride bond driven by GTP hydrolysis by CysN coupled to ATP hydrolysis by CysD. This is Sulfate adenylyltransferase subunit 2 from Mycolicibacterium vanbaalenii (strain DSM 7251 / JCM 13017 / BCRC 16820 / KCTC 9966 / NRRL B-24157 / PYR-1) (Mycobacterium vanbaalenii).